The primary structure comprises 223 residues: Ribosome maturation factor RimM (223 aa).

Low complexity predominate over residues 1–12 (MARRPGSSSRGP). Disordered stretches follow at residues 1–44 (MARR…DPGL) and 204–223 (ADPP…DDPG). Residues 136 to 210 (EDEFFLTDLI…KVVADPPDDL (75 aa)) form the PRC barrel domain.

The protein belongs to the RimM family. As to quaternary structure, binds ribosomal protein uS19.

Its subcellular location is the cytoplasm. An accessory protein needed during the final step in the assembly of 30S ribosomal subunit, possibly for assembly of the head region. Essential for efficient processing of 16S rRNA. May be needed both before and after RbfA during the maturation of 16S rRNA. It has affinity for free ribosomal 30S subunits but not for 70S ribosomes. The polypeptide is Ribosome maturation factor RimM (Methylorubrum extorquens (strain PA1) (Methylobacterium extorquens)).